The chain runs to 319 residues: Formimidoylglutamase (319 aa).

6 residues coordinate Mn(2+): His131, Asp154, His156, Asp158, Cys248, and Asp250.

Belongs to the arginase family. Mn(2+) is required as a cofactor.

It carries out the reaction N-formimidoyl-L-glutamate + H2O = formamide + L-glutamate. The protein operates within amino-acid degradation; L-histidine degradation into L-glutamate; L-glutamate from N-formimidoyl-L-glutamate (hydrolase route): step 1/1. Catalyzes the conversion of N-formimidoyl-L-glutamate to L-glutamate and formamide. The protein is Formimidoylglutamase of Legionella pneumophila subsp. pneumophila (strain Philadelphia 1 / ATCC 33152 / DSM 7513).